Consider the following 457-residue polypeptide: Siroheme synthase (457 aa).

The precorrin-2 dehydrogenase /sirohydrochlorin ferrochelatase stretch occupies residues 1 to 204 (MDHLPIFCQL…NDQKAITETT (204 aa)). Residues 22–23 (DV) and 43–44 (LA) contribute to the NAD(+) site. A Phosphoserine modification is found at S128. The segment at 216–457 (GEVVLVGAGP…RDKLNWFSNH (242 aa)) is uroporphyrinogen-III C-methyltransferase. S-adenosyl-L-methionine is bound at residue P225. D248 serves as the catalytic Proton acceptor. The Proton donor role is filled by K270. S-adenosyl-L-methionine contacts are provided by residues 301–303 (GGD), I306, 331–332 (TA), M382, and G411.

The protein in the N-terminal section; belongs to the precorrin-2 dehydrogenase / sirohydrochlorin ferrochelatase family. It in the C-terminal section; belongs to the precorrin methyltransferase family.

The catalysed reaction is uroporphyrinogen III + 2 S-adenosyl-L-methionine = precorrin-2 + 2 S-adenosyl-L-homocysteine + H(+). The enzyme catalyses precorrin-2 + NAD(+) = sirohydrochlorin + NADH + 2 H(+). It catalyses the reaction siroheme + 2 H(+) = sirohydrochlorin + Fe(2+). It participates in cofactor biosynthesis; adenosylcobalamin biosynthesis; precorrin-2 from uroporphyrinogen III: step 1/1. Its pathway is cofactor biosynthesis; adenosylcobalamin biosynthesis; sirohydrochlorin from precorrin-2: step 1/1. It functions in the pathway porphyrin-containing compound metabolism; siroheme biosynthesis; precorrin-2 from uroporphyrinogen III: step 1/1. The protein operates within porphyrin-containing compound metabolism; siroheme biosynthesis; siroheme from sirohydrochlorin: step 1/1. It participates in porphyrin-containing compound metabolism; siroheme biosynthesis; sirohydrochlorin from precorrin-2: step 1/1. In terms of biological role, multifunctional enzyme that catalyzes the SAM-dependent methylations of uroporphyrinogen III at position C-2 and C-7 to form precorrin-2 via precorrin-1. Then it catalyzes the NAD-dependent ring dehydrogenation of precorrin-2 to yield sirohydrochlorin. Finally, it catalyzes the ferrochelation of sirohydrochlorin to yield siroheme. The protein is Siroheme synthase of Escherichia coli O157:H7 (strain EC4115 / EHEC).